A 132-amino-acid polypeptide reads, in one-letter code: Replication enhancer protein (132 aa).

This sequence belongs to the geminiviridae replication enhancer protein family. In terms of assembly, homooligomer. Interacts with the replication-associated protein (REP). Interacts with host proliferating cell nuclear antigen (PCNA). Interacts with host retinoblastoma-related protein 1 (RBR1), and may thereby deregulate the host cell cycle. Oligomerization and interaction with PCNA are necessary for optimal replication enhancement.

Functionally, increases viral DNA accumulation. Enhances infectivity and symptom expression. The chain is Replication enhancer protein from Potato yellow mosaic virus (isolate Venezuela) (PYMV).